The sequence spans 676 residues: Transcription factor RLM1 (676 aa).

In terms of domain architecture, MADS-box spans 3–57; it reads RRKIEIQRISDDRNRAVTFIKRKAGLFKKAHELSVLCQVDIAVIILGSNNTFYEF. A DNA-binding region (mef2-type) is located at residues 58 to 87; it reads SSVDTNDLIYHYQNDKNLLHEVKDPSDYGD. The segment covering 103–120 has biased composition (polar residues); the sequence is SSMSNKPSKSNVKGMNQS. Residues 103 to 156 are disordered; sequence SSMSNKPSKSNVKGMNQSENDDDENNDEDDDDHGNFERNSNMHSNKKASDKNIP. S120 carries the phosphoserine modification. Residues 121–134 show a composition bias toward acidic residues; that stretch reads ENDDDENNDEDDDD. Position 164 is a phosphoserine (S164). The segment covering 173-183 has biased composition (basic and acidic residues); the sequence is DGSEQNKRHPE. Disordered regions lie at residues 173 to 192, 202 to 318, 330 to 424, 472 to 514, and 532 to 631; these read DGSEQNKRHPENALPPLQHL, ISRT…RRKL, NNNF…PFGS, KKQS…VHDL, and MGPN…NSST. A compositionally biased stretch (polar residues) spans 260–276; sequence ISPNKFSKPFTNASSRT. The span at 284–295 shows a compositional bias: low complexity; that stretch reads NNSGSNNNDNSN. Residues 296–312 are compositionally biased toward polar residues; it reads YTQSPSNSLEDSIQQTV. 3 stretches are compositionally biased toward low complexity: residues 334–359, 368–381, and 399–417; these read SSNSAIPSEPSSASSTSANGNSMGSS, SRSSKISPLSASAS, and PNANAPNGSNNGNGSNNNN. S374 and S377 each carry phosphoserine. The span at 472–506 shows a compositional bias: polar residues; the sequence is KKQSQTVPLTTTLTGRPPSTFSGPETSNGPPTGSL. Low complexity predominate over residues 539–604; the sequence is PGNTNNPGTF…NSNNSYYSNN (66 aa). Polar residues predominate over residues 621 to 631; that stretch reads GDSNNQSNSST.

It belongs to the MEF2 family. As to quaternary structure, can heterodimerize with SPM1. Interacts with KDX1 and SLT2. Post-translationally, phosphorylated by SLT2.

The protein resides in the nucleus. Its function is as follows. May function as a transcription factor downstream of MPK1 that is subject to activation by the MPK1 mitogen-activated protein kinase pathway. Binds to the DNA sequence 5'-CTA[TA](4)TAG-3'. At least some RML1 target genes are involved in cell wall biosynthesis. The sequence is that of Transcription factor RLM1 (RLM1) from Saccharomyces cerevisiae (strain ATCC 204508 / S288c) (Baker's yeast).